A 167-amino-acid polypeptide reads, in one-letter code: Translationally-controlled tumor protein homolog (167 aa).

The TCTP domain occupies 1–167; it reads MIIFKDVISN…WKHGIKEEKI (167 aa).

The protein belongs to the TCTP family.

Its subcellular location is the cytoplasm. The protein resides in the cytoskeleton. Involved in protein synthesis. Involved in microtubule stabilization. In Yarrowia lipolytica (strain CLIB 122 / E 150) (Yeast), this protein is Translationally-controlled tumor protein homolog.